The chain runs to 139 residues: ATP synthase epsilon chain (139 aa).

Belongs to the ATPase epsilon chain family. F-type ATPases have 2 components, CF(1) - the catalytic core - and CF(0) - the membrane proton channel. CF(1) has five subunits: alpha(3), beta(3), gamma(1), delta(1), epsilon(1). CF(0) has three main subunits: a, b and c.

The protein resides in the cell membrane. Its function is as follows. Produces ATP from ADP in the presence of a proton gradient across the membrane. This chain is ATP synthase epsilon chain, found in Enterococcus faecalis (strain ATCC 700802 / V583).